Here is a 594-residue protein sequence, read N- to C-terminus: Aspartate--tRNA(Asp/Asn) ligase (594 aa).

Residue Glu-175 coordinates L-aspartate. Positions Gln-199–Lys-202 are aspartate. L-aspartate contacts are provided by Arg-221 and His-454. Arg-221–Glu-223 is a binding site for ATP. Glu-488 contacts ATP. L-aspartate is bound at residue Arg-495. Gly-540–Arg-543 provides a ligand contact to ATP.

It belongs to the class-II aminoacyl-tRNA synthetase family. Type 1 subfamily. As to quaternary structure, homodimer.

Its subcellular location is the cytoplasm. The enzyme catalyses tRNA(Asx) + L-aspartate + ATP = L-aspartyl-tRNA(Asx) + AMP + diphosphate. Functionally, aspartyl-tRNA synthetase with relaxed tRNA specificity since it is able to aspartylate not only its cognate tRNA(Asp) but also tRNA(Asn). Reaction proceeds in two steps: L-aspartate is first activated by ATP to form Asp-AMP and then transferred to the acceptor end of tRNA(Asp/Asn). This chain is Aspartate--tRNA(Asp/Asn) ligase, found in Chelativorans sp. (strain BNC1).